A 694-amino-acid chain; its full sequence is Methionine--tRNA ligase (694 aa).

Residues 12–22 carry the 'HIGH' region motif; sequence PYANGPLHLGH. Cys-143, Cys-146, Cys-156, and Cys-159 together coordinate Zn(2+). The 'KMSKS' region signature appears at 330 to 334; it reads KMSKS. An ATP-binding site is contributed by Lys-333. Low complexity predominate over residues 550–573; that stretch reads MAAPAAPATTTKPAPSKADAKPAA. Residues 550 to 582 are disordered; that stretch reads MAAPAAPATTTKPAPSKADAKPAAVANPESQTT. Residues 591–694 enclose the tRNA-binding domain; that stretch reads DFAKLDLRIG…SGAQPGMPVR (104 aa).

This sequence belongs to the class-I aminoacyl-tRNA synthetase family. MetG type 1 subfamily. In terms of assembly, homodimer. It depends on Zn(2+) as a cofactor.

It is found in the cytoplasm. The enzyme catalyses tRNA(Met) + L-methionine + ATP = L-methionyl-tRNA(Met) + AMP + diphosphate. In terms of biological role, is required not only for elongation of protein synthesis but also for the initiation of all mRNA translation through initiator tRNA(fMet) aminoacylation. The chain is Methionine--tRNA ligase from Xanthomonas euvesicatoria pv. vesicatoria (strain 85-10) (Xanthomonas campestris pv. vesicatoria).